Here is a 619-residue protein sequence, read N- to C-terminus: 1-deoxy-D-xylulose-5-phosphate synthase (619 aa).

Thiamine diphosphate is bound by residues His74 and 115 to 117 (GHS). Asp146 serves as a coordination point for Mg(2+). Residues 147 to 148 (GA), Asn175, and Tyr285 each bind thiamine diphosphate. Asn175 lines the Mg(2+) pocket. The interval 289–312 (EKSPSKYHAVPPRANEKEKPSKPC) is disordered. Basic and acidic residues predominate over residues 302–312 (ANEKEKPSKPC). Residue Glu365 coordinates thiamine diphosphate.

It belongs to the transketolase family. DXPS subfamily. Homodimer. The cofactor is Mg(2+). Thiamine diphosphate is required as a cofactor.

The catalysed reaction is D-glyceraldehyde 3-phosphate + pyruvate + H(+) = 1-deoxy-D-xylulose 5-phosphate + CO2. It functions in the pathway metabolic intermediate biosynthesis; 1-deoxy-D-xylulose 5-phosphate biosynthesis; 1-deoxy-D-xylulose 5-phosphate from D-glyceraldehyde 3-phosphate and pyruvate: step 1/1. Catalyzes the acyloin condensation reaction between C atoms 2 and 3 of pyruvate and glyceraldehyde 3-phosphate to yield 1-deoxy-D-xylulose-5-phosphate (DXP). This chain is 1-deoxy-D-xylulose-5-phosphate synthase, found in Clostridium botulinum (strain Eklund 17B / Type B).